The primary structure comprises 346 residues: Probable alcohol dehydrogenase AdhA (346 aa).

Residues cysteine 51, histidine 73, cysteine 109, cysteine 112, cysteine 115, cysteine 123, and cysteine 165 each contribute to the Zn(2+) site.

The protein belongs to the zinc-containing alcohol dehydrogenase family. It depends on Zn(2+) as a cofactor.

It carries out the reaction a primary alcohol + NAD(+) = an aldehyde + NADH + H(+). The catalysed reaction is a secondary alcohol + NAD(+) = a ketone + NADH + H(+). The protein is Probable alcohol dehydrogenase AdhA (adhA) of Mycobacterium tuberculosis (strain CDC 1551 / Oshkosh).